Consider the following 343-residue polypeptide: UDP-3-O-acylglucosamine N-acyltransferase 2 (343 aa).

His251 serves as the catalytic Proton acceptor.

This sequence belongs to the transferase hexapeptide repeat family. LpxD subfamily. Homotrimer.

The catalysed reaction is a UDP-3-O-[(3R)-3-hydroxyacyl]-alpha-D-glucosamine + a (3R)-hydroxyacyl-[ACP] = a UDP-2-N,3-O-bis[(3R)-3-hydroxyacyl]-alpha-D-glucosamine + holo-[ACP] + H(+). Its pathway is bacterial outer membrane biogenesis; LPS lipid A biosynthesis. Functionally, catalyzes the N-acylation of UDP-3-O-acylglucosamine using 3-hydroxyacyl-ACP as the acyl donor. Is involved in the biosynthesis of lipid A, a phosphorylated glycolipid that anchors the lipopolysaccharide to the outer membrane of the cell. The polypeptide is UDP-3-O-acylglucosamine N-acyltransferase 2 (Legionella pneumophila subsp. pneumophila (strain Philadelphia 1 / ATCC 33152 / DSM 7513)).